The chain runs to 223 residues: Ribonuclease 3 (223 aa).

Positions 3 to 125 (LERLQKKLGY…IIAAVYLDAG (123 aa)) constitute an RNase III domain. Residue Glu-38 coordinates Mg(2+). Residue Asp-42 is part of the active site. 2 residues coordinate Mg(2+): Asp-111 and Glu-114. The active site involves Glu-114. In terms of domain architecture, DRBM spans 152–222 (DPKTRLQEYL…ALQVIKVLGI (71 aa)).

The protein belongs to the ribonuclease III family. As to quaternary structure, homodimer. Mg(2+) serves as cofactor.

It is found in the cytoplasm. It carries out the reaction Endonucleolytic cleavage to 5'-phosphomonoester.. Digests double-stranded RNA. Involved in the processing of primary rRNA transcript to yield the immediate precursors to the large and small rRNAs (23S and 16S). Processes some mRNAs, and tRNAs when they are encoded in the rRNA operon. Processes pre-crRNA and tracrRNA of type II CRISPR loci if present in the organism. The polypeptide is Ribonuclease 3 (Glaesserella parasuis serovar 5 (strain SH0165) (Haemophilus parasuis)).